The sequence spans 208 residues: Coiled-coil domain-containing protein 25 (208 aa).

Topologically, residues M1–D105 are extracellular. Residues K21–E25 form a DNA-binding region. Position 23 is an N6-acetyllysine (K23). Residues V106–V122 traverse the membrane as a helical segment. Residues V117–S187 adopt a coiled-coil conformation. The Cytoplasmic portion of the chain corresponds to E123–M208. Basic and acidic residues predominate over residues E145–R184. Residues E145 to M208 are disordered. S204 is subject to Phosphoserine.

This sequence belongs to the CCDC25 family. Interacts (via cytoplasmic region) with ILK.

It is found in the cell membrane. The protein resides in the endomembrane system. In terms of biological role, transmembrane receptor that senses neutrophil extracellular traps (NETs) and triggers the ILK-PARVB pathway to enhance cell motility. NETs are mainly composed of DNA fibers and are released by neutrophils to bind pathogens during inflammation. Formation of NETs is also associated with cancer metastasis, NET-DNA acting as a chemotactic factor to attract cancer cells. Specifically binds NETs on its extracellular region, in particular the 8-OHdG-enriched DNA present in NETs, and recruits ILK, initiating the ILK-PARVB cascade to induce cytoskeleton rearrangement and directional migration of cells. The protein is Coiled-coil domain-containing protein 25 of Bos taurus (Bovine).